The sequence spans 366 residues: Endogenous Bornavirus-like nucleoprotein 1 (366 aa).

Residues 1–15 show a composition bias toward polar residues; that stretch reads MSRPRNNPQTSSPQD. The interval 1 to 22 is disordered; the sequence is MSRPRNNPQTSSPQDSTKDGSS.

In terms of tissue distribution, expression detected by RT-PCR in a few cell lines, including OL, HEK293T and MOLT-4. Not observed in HeLa cells.

In terms of biological role, may act as an RNA-binding protein. Highly homologous to the bornavirus nucleocapsid N protein that binds viral RNA and oligomerizes. This Homo sapiens (Human) protein is Endogenous Bornavirus-like nucleoprotein 1 (EBLN1).